Reading from the N-terminus, the 279-residue chain is MQIGCHVSISGSIDKSVDNAVERECSAFQIFTRNPRGWHAKTLTKDDITNFKSKLKESKIDRFATCAHMPYLPNLATPKEDGFEKSVKTLVDEVERCAQLGIPYLVTHLGSHLGTGEEAGIKKLVKGLTEAGKTKNDVMILLENTAGQKNSVGSDFKQLGEIFKQLKPAKKFGVCLDTCHAFVFGYDLRTEAKVKETFSEFDKYVGIDNLKILHLNDAKGDLGCNLDRHYHLGMGGIGEKGISAIVKFANKKKIPIILETPIDDDRDDFENIRKAKEFA.

H68, H108, E143, D177, H180, H214, D227, H229, and E259 together coordinate Zn(2+).

It belongs to the AP endonuclease 2 family. Requires Zn(2+) as cofactor.

It carries out the reaction Endonucleolytic cleavage to 5'-phosphooligonucleotide end-products.. Functionally, endonuclease IV plays a role in DNA repair. It cleaves phosphodiester bonds at apurinic or apyrimidinic (AP) sites, generating a 3'-hydroxyl group and a 5'-terminal sugar phosphate. The chain is Probable endonuclease 4 from Nitrosopumilus maritimus (strain SCM1).